The primary structure comprises 571 residues: Protein E6 homolog (571 aa).

Belongs to the chordopoxvirinae E6 family.

It is found in the virion. In terms of biological role, late protein which may play a role in the virion morphogenesis and have therefore an indirect role on viral transcription ability. This chain is Protein E6 homolog, found in Vertebrata (FPV).